The primary structure comprises 300 residues: MAFQECVIEVAQDQAEAWSDALFDLGALSVSVEDADADTPDEQPLFGEPGLEPKQLAWNRSRVVALFGDDADPAVVVAAAANQLGIDPVPAYQLRAVEDQDWVRLTQSQFEPIRIGERIWVVPSWHDAPEPDAVVLELDPGLAFGTGSHPTTRLCMQWLEQNLKPGETVLDYGCGSGILAIVARKLGAGDTVGIDIDPNAVEASRYNAERNRVEASFALPESVSEASYDLVVANILSNPLKLMAAMLSARVRAGGRLVLSGVLERQADEVAAAYAPWLPLTVWRSEEGWVCLHGTRGAQP.

4 residues coordinate S-adenosyl-L-methionine: Thr152, Gly173, Asp195, and Asn234.

It belongs to the methyltransferase superfamily. PrmA family.

It localises to the cytoplasm. The enzyme catalyses L-lysyl-[protein] + 3 S-adenosyl-L-methionine = N(6),N(6),N(6)-trimethyl-L-lysyl-[protein] + 3 S-adenosyl-L-homocysteine + 3 H(+). Functionally, methylates ribosomal protein L11. In Cupriavidus necator (strain ATCC 17699 / DSM 428 / KCTC 22496 / NCIMB 10442 / H16 / Stanier 337) (Ralstonia eutropha), this protein is Ribosomal protein L11 methyltransferase.